Here is a 657-residue protein sequence, read N- to C-terminus: Protein mono-ADP-ribosyltransferase TIPARP (657 aa).

A compositionally biased stretch (acidic residues) spans 1–10; that stretch reads MEMETTEPEP. The tract at residues 1–21 is disordered; it reads MEMETTEPEPDCVVQPPSPPD. Cys39 is subject to ADP-ribosylcysteine. The short motif at 41–47 is the Nuclear localization signal element; sequence KKKDQKR. The segment at 237–264 adopts a C3H1-type zinc-finger fold; it reads ENGIEICMDFLQGTCIYGRDCLKHHTVL. The WWE domain maps to 332 to 410; that stretch reads STPPSSNVNS…RRPLFRSCFI (79 aa). Residues 449-657 form the PARP catalytic domain; it reads YPETWVYMHP…YEEVSNTVSI (209 aa).

The protein belongs to the ARTD/PARP family. As to quaternary structure, interacts with AHR. In terms of processing, auto-mono-ADP-ribosylated.

Its subcellular location is the nucleus. The catalysed reaction is L-aspartyl-[protein] + NAD(+) = 4-O-(ADP-D-ribosyl)-L-aspartyl-[protein] + nicotinamide. The enzyme catalyses L-glutamyl-[protein] + NAD(+) = 5-O-(ADP-D-ribosyl)-L-glutamyl-[protein] + nicotinamide. It carries out the reaction L-cysteinyl-[protein] + NAD(+) = S-(ADP-D-ribosyl)-L-cysteinyl-[protein] + nicotinamide + H(+). ADP-ribosyltransferase activity is inhibited by PJ34; inhibition is however not specific to TIPARP and other PARP-domain containing proteins are also inhibited by PJ34. Partially inhibited by KU0058948. ADP-ribosyltransferase that mediates mono-ADP-ribosylation of glutamate, aspartate and cysteine residues on target proteins. Acts as a negative regulator of AHR by mediating mono-ADP-ribosylation of AHR, leading to inhibit transcription activator activity of AHR. The sequence is that of Protein mono-ADP-ribosyltransferase TIPARP from Homo sapiens (Human).